The sequence spans 615 residues: Isocitrate dehydrogenase kinase/phosphatase (615 aa).

Residues Ala-325–Met-331 and Lys-346 each bind ATP. Asp-381 is an active-site residue.

It belongs to the AceK family.

It is found in the cytoplasm. It carries out the reaction L-seryl-[isocitrate dehydrogenase] + ATP = O-phospho-L-seryl-[isocitrate dehydrogenase] + ADP + H(+). In terms of biological role, bifunctional enzyme which can phosphorylate or dephosphorylate isocitrate dehydrogenase (IDH) on a specific serine residue. This is a regulatory mechanism which enables bacteria to bypass the Krebs cycle via the glyoxylate shunt in response to the source of carbon. When bacteria are grown on glucose, IDH is fully active and unphosphorylated, but when grown on acetate or ethanol, the activity of IDH declines drastically concomitant with its phosphorylation. The protein is Isocitrate dehydrogenase kinase/phosphatase of Albidiferax ferrireducens (strain ATCC BAA-621 / DSM 15236 / T118) (Rhodoferax ferrireducens).